The chain runs to 381 residues: 40-kDa huntingtin-associated protein (381 aa).

At alanine 2 the chain carries N-acetylalanine. The Nuclear localization signal signature appears at lysine 34–arginine 36. Positions glutamine 221–serine 265 are disordered. Over residues proline 226–arginine 242 the composition is skewed to pro residues.

In terms of assembly, interacts with HTT (via C-terminus). Interacts with RAB5A. Found in a complex with F8A1/F8A2/F8A3, HTT and RAB5A; mediates the recruitment of HTT by RAB5A onto early endosomes. Produced abundantly in a wide variety of cell types.

It is found in the cytoplasm. The protein localises to the nucleus. It localises to the early endosome. Its subcellular location is the nuclear body. RAB5A effector molecule that is involved in vesicular trafficking of early endosomes. Mediates the recruitment of HTT by RAB5A onto early endosomes. The HTT-F8A1/F8A2/F8A3-RAB5A complex stimulates early endosomal interaction with actin filaments and inhibits interaction with microtubules, leading to the reduction of endosome motility. This is 40-kDa huntingtin-associated protein (F8a1) from Mus musculus (Mouse).